Consider the following 102-residue polypeptide: uncharacterized protein (102 aa).

A helical membrane pass occupies residues 36–55 (IISLLAIFIKMCLWLWKQFL).

The protein resides in the membrane. This is an uncharacterized protein from Homo sapiens (Human).